We begin with the raw amino-acid sequence, 421 residues long: MVADVLLTHFNQLFCLNDPGHPLTGQEMKKATIVEDGYIAIKDGLIVALGSGEPDAELVGPQTIMRSYKGKIATPGIIDCHTHLVYGGSREHEFAKKLAGVSYLDILAQGGGILSTVRATRSASFDNLYQKSKRLLDYMLLHGVTTVEAKSGYGLDWETEKRQLDVVAALEKDHPIDLVSTFMAAHAIPEEYKGNPKAYLDVIIKDMLPVVKEENLAEFCDIFCEKNVFTADESRYLLSKAKEMGFKLRIHADEIASIGGVDVAAELSAVSAEHLMMITNDGIAKLIGAGVIGNLLPATTFSLMEDTYAPARKMIDAGMAITLSTDSNPGSCPTANMQFVMQLGCFMLRLTPIEVLNAVTINAAYSVNRQERVGSLTVGKEADIAIFDAPNIDYLFYFFATNLIHQVYKKGQLTVDRGRIL.

2 residues coordinate Fe(3+): histidine 81 and histidine 83. Zn(2+) is bound by residues histidine 81 and histidine 83. 3 residues coordinate 4-imidazolone-5-propanoate: arginine 90, tyrosine 153, and histidine 186. Tyrosine 153 provides a ligand contact to N-formimidoyl-L-glutamate. Residue histidine 251 participates in Fe(3+) binding. Position 251 (histidine 251) interacts with Zn(2+). Glutamate 254 contacts 4-imidazolone-5-propanoate. Aspartate 326 is a binding site for Fe(3+). Position 326 (aspartate 326) interacts with Zn(2+). Residues asparagine 328 and glycine 330 each coordinate N-formimidoyl-L-glutamate. A 4-imidazolone-5-propanoate-binding site is contributed by serine 331.

It belongs to the metallo-dependent hydrolases superfamily. HutI family. The cofactor is Zn(2+). Fe(3+) serves as cofactor.

Its subcellular location is the cytoplasm. The catalysed reaction is 4-imidazolone-5-propanoate + H2O = N-formimidoyl-L-glutamate. The protein operates within amino-acid degradation; L-histidine degradation into L-glutamate; N-formimidoyl-L-glutamate from L-histidine: step 3/3. Its function is as follows. Catalyzes the hydrolytic cleavage of the carbon-nitrogen bond in imidazolone-5-propanoate to yield N-formimidoyl-L-glutamate. It is the third step in the universal histidine degradation pathway. The protein is Imidazolonepropionase of Streptococcus pyogenes serotype M3 (strain SSI-1).